A 375-amino-acid chain; its full sequence is MHCALYDAGRCRSCQWIEQPPDTQLAAKMTDLRTLLAALPVGEWGAPVSGPELAFRNKAKMVVSGSVEKPLLGMLHRDGTPVDLTECPLYPASFYAVFAALKPFIARAGLTPYNVARKRGELKYLLLTQSTLDGGLMLRFVLRSKEKLEQLRAALPGLLAELPQLKVVTANIQPVHMAIMEGDEEIWLTQQQALAESFNGVPLWIRPQSFFQTNPTVASALYATARDWVRALPVNHMWDLFCGVGGFGLHCATPEMTLTGIEIAPEAIASARASAQALGLRNVHFQALDSTDFATGQQAVPDLVLVNPPRRGIGKALCEYLSHMAPRYIVYSSCNAQTMAKDIGEWPGYRIARVQLFDMFPHTAHYEVLTLLVRE.

Cys-3, Cys-11, Cys-14, and Cys-87 together coordinate [4Fe-4S] cluster. Residues Gln-212, Phe-241, Glu-262, and Asn-307 each contribute to the S-adenosyl-L-methionine site. Catalysis depends on Cys-334, which acts as the Nucleophile.

The protein belongs to the class I-like SAM-binding methyltransferase superfamily. RNA M5U methyltransferase family. RlmC subfamily.

The catalysed reaction is uridine(747) in 23S rRNA + S-adenosyl-L-methionine = 5-methyluridine(747) in 23S rRNA + S-adenosyl-L-homocysteine + H(+). Functionally, catalyzes the formation of 5-methyl-uridine at position 747 (m5U747) in 23S rRNA. The chain is 23S rRNA (uracil(747)-C(5))-methyltransferase RlmC from Cronobacter sakazakii (strain ATCC BAA-894) (Enterobacter sakazakii).